A 29-amino-acid polypeptide reads, in one-letter code: GFCAEAGIKCNDIHCCGNLKCKAVGSNRV.

2 disulfides stabilise this stretch: C3–C16 and C10–C21.

Expressed by the venom gland.

It is found in the secreted. The sequence is that of U20-ctenitoxin-Co1a from Ctenus ornatus (Brazilian spider).